The following is a 172-amino-acid chain: Adenine phosphoribosyltransferase (172 aa).

The protein belongs to the purine/pyrimidine phosphoribosyltransferase family. As to quaternary structure, homodimer.

The protein localises to the cytoplasm. It catalyses the reaction AMP + diphosphate = 5-phospho-alpha-D-ribose 1-diphosphate + adenine. It participates in purine metabolism; AMP biosynthesis via salvage pathway; AMP from adenine: step 1/1. Catalyzes a salvage reaction resulting in the formation of AMP, that is energically less costly than de novo synthesis. This is Adenine phosphoribosyltransferase from Clostridium botulinum (strain Loch Maree / Type A3).